Here is a 481-residue protein sequence, read N- to C-terminus: Aspartyl/glutamyl-tRNA(Asn/Gln) amidotransferase subunit B (481 aa).

Belongs to the GatB/GatE family. GatB subfamily. Heterotrimer of A, B and C subunits.

It catalyses the reaction L-glutamyl-tRNA(Gln) + L-glutamine + ATP + H2O = L-glutaminyl-tRNA(Gln) + L-glutamate + ADP + phosphate + H(+). The catalysed reaction is L-aspartyl-tRNA(Asn) + L-glutamine + ATP + H2O = L-asparaginyl-tRNA(Asn) + L-glutamate + ADP + phosphate + 2 H(+). Allows the formation of correctly charged Asn-tRNA(Asn) or Gln-tRNA(Gln) through the transamidation of misacylated Asp-tRNA(Asn) or Glu-tRNA(Gln) in organisms which lack either or both of asparaginyl-tRNA or glutaminyl-tRNA synthetases. The reaction takes place in the presence of glutamine and ATP through an activated phospho-Asp-tRNA(Asn) or phospho-Glu-tRNA(Gln). This chain is Aspartyl/glutamyl-tRNA(Asn/Gln) amidotransferase subunit B, found in Pseudomonas putida (strain ATCC 700007 / DSM 6899 / JCM 31910 / BCRC 17059 / LMG 24140 / F1).